Reading from the N-terminus, the 254-residue chain is Persulfide dioxygenase ETHE1, mitochondrial (254 aa).

The transit peptide at 1–7 directs the protein to the mitochondrion; it reads MAEAVLR. Phosphoserine occurs at positions 14 and 19. At K66 the chain carries N6-acetyllysine. 3 residues coordinate Fe cation: H79, H135, and D154. N6-acetyllysine; alternate is present on K172. K172 carries the N6-succinyllysine; alternate modification.

This sequence belongs to the metallo-beta-lactamase superfamily. Glyoxalase II family. In terms of assembly, homodimer. Monomer. Interacts with TST. May interact with RELA. Requires Fe(2+) as cofactor. As to expression, ubiquitously expressed.

It localises to the cytoplasm. It is found in the nucleus. Its subcellular location is the mitochondrion matrix. The catalysed reaction is S-sulfanylglutathione + O2 + H2O = sulfite + glutathione + 2 H(+). With respect to regulation, glutathione increases enzyme activity. Functionally, sulfur dioxygenase that plays an essential role in hydrogen sulfide catabolism in the mitochondrial matrix. Hydrogen sulfide (H(2)S) is first oxidized by SQRDL, giving rise to cysteine persulfide residues. ETHE1 consumes molecular oxygen to catalyze the oxidation of the persulfide, once it has been transferred to a thiophilic acceptor, such as glutathione (R-SSH). Plays an important role in metabolic homeostasis in mitochondria by metabolizing hydrogen sulfide and preventing the accumulation of supraphysiological H(2)S levels that have toxic effects, due to the inhibition of cytochrome c oxidase. First described as a protein that can shuttle between the nucleus and the cytoplasm and suppress p53-induced apoptosis by sequestering the transcription factor RELA/NFKB3 in the cytoplasm and preventing its accumulation in the nucleus. The protein is Persulfide dioxygenase ETHE1, mitochondrial (ETHE1) of Homo sapiens (Human).